A 140-amino-acid polypeptide reads, in one-letter code: Large ribosomal subunit protein uL16 (140 aa).

It belongs to the universal ribosomal protein uL16 family. Part of the 50S ribosomal subunit.

Binds 23S rRNA and is also seen to make contacts with the A and possibly P site tRNAs. This Geotalea uraniireducens (strain Rf4) (Geobacter uraniireducens) protein is Large ribosomal subunit protein uL16.